We begin with the raw amino-acid sequence, 293 residues long: Bifunctional protein FolD (293 aa).

NADP(+) is bound by residues 162–164 (GQS) and isoleucine 227.

It belongs to the tetrahydrofolate dehydrogenase/cyclohydrolase family. In terms of assembly, homodimer.

The catalysed reaction is (6R)-5,10-methylene-5,6,7,8-tetrahydrofolate + NADP(+) = (6R)-5,10-methenyltetrahydrofolate + NADPH. It catalyses the reaction (6R)-5,10-methenyltetrahydrofolate + H2O = (6R)-10-formyltetrahydrofolate + H(+). The protein operates within one-carbon metabolism; tetrahydrofolate interconversion. Catalyzes the oxidation of 5,10-methylenetetrahydrofolate to 5,10-methenyltetrahydrofolate and then the hydrolysis of 5,10-methenyltetrahydrofolate to 10-formyltetrahydrofolate. This chain is Bifunctional protein FolD, found in Metamycoplasma arthritidis (strain 158L3-1) (Mycoplasma arthritidis).